The following is a 1391-amino-acid chain: Nuclear pore complex protein Nup155 (1391 aa).

Serine 526 carries an O-linked (GlcNAc) serine glycan. 2 disordered regions span residues 604–630 (SSSPVPSGSPYPNPSSLGTPSHGAQPP) and 985–1012 (QSKAAPQSPSVPKKPGPPVLSSDPNMLS). Position 1057 is a phosphoserine (serine 1057).

It belongs to the non-repetitive/WGA-negative nucleoporin family. Interacts with GLE1 and NUP35/NUP53. Able to form a heterotrimer with GLE1 and NUP42 in vitro. Forms a complex with NUP35, NUP93, NUP205 and lamin B. Phosphorylated. Phosphorylation and dephosphorylation may be important for the function of NUP155 and may play a role in the reversible disassembly of the nuclear pore complex during mitosis. In terms of processing, disulfide-linked to NUP62. The inner channel of the NPC has a different redox environment from the cytoplasm and allows the formation of interchain disulfide bonds between some nucleoporins, the significant increase of these linkages upon oxidative stress reduces the permeability of the NPC.

The protein resides in the nucleus. The protein localises to the nuclear pore complex. It is found in the nucleus membrane. Its function is as follows. Essential component of nuclear pore complex. Could be essessential for embryogenesis. Nucleoporins may be involved both in binding and translocating proteins during nucleocytoplasmic transport. The sequence is that of Nuclear pore complex protein Nup155 (Nup155) from Mus musculus (Mouse).